The chain runs to 405 residues: Tryptophan synthase beta chain (405 aa).

The residue at position 86 (Lys86) is an N6-(pyridoxal phosphate)lysine.

Belongs to the TrpB family. In terms of assembly, tetramer of two alpha and two beta chains. It depends on pyridoxal 5'-phosphate as a cofactor.

It carries out the reaction (1S,2R)-1-C-(indol-3-yl)glycerol 3-phosphate + L-serine = D-glyceraldehyde 3-phosphate + L-tryptophan + H2O. The protein operates within amino-acid biosynthesis; L-tryptophan biosynthesis; L-tryptophan from chorismate: step 5/5. The beta subunit is responsible for the synthesis of L-tryptophan from indole and L-serine. This is Tryptophan synthase beta chain from Shewanella piezotolerans (strain WP3 / JCM 13877).